A 72-amino-acid chain; its full sequence is Translation initiation factor IF-1 1 (72 aa).

The 72-residue stretch at 1 to 72 (MSKDDVIQMA…TRARIIFRAK (72 aa)) folds into the S1-like domain.

This sequence belongs to the IF-1 family. Component of the 30S ribosomal translation pre-initiation complex which assembles on the 30S ribosome in the order IF-2 and IF-3, IF-1 and N-formylmethionyl-tRNA(fMet); mRNA recruitment can occur at any time during PIC assembly.

Its subcellular location is the cytoplasm. One of the essential components for the initiation of protein synthesis. Stabilizes the binding of IF-2 and IF-3 on the 30S subunit to which N-formylmethionyl-tRNA(fMet) subsequently binds. Helps modulate mRNA selection, yielding the 30S pre-initiation complex (PIC). Upon addition of the 50S ribosomal subunit IF-1, IF-2 and IF-3 are released leaving the mature 70S translation initiation complex. The protein is Translation initiation factor IF-1 1 of Polynucleobacter asymbioticus (strain DSM 18221 / CIP 109841 / QLW-P1DMWA-1) (Polynucleobacter necessarius subsp. asymbioticus).